The sequence spans 358 residues: Probable D-xylulose reductase A (358 aa).

Residues cysteine 47, histidine 72, and glutamate 73 each contribute to the Zn(2+) site. 182–187 (GAGPVG) contacts NAD(+).

The protein belongs to the zinc-containing alcohol dehydrogenase family. The cofactor is Zn(2+).

It catalyses the reaction xylitol + NAD(+) = D-xylulose + NADH + H(+). It functions in the pathway carbohydrate degradation; L-arabinose degradation via L-arabinitol; D-xylulose 5-phosphate from L-arabinose (fungal route): step 4/5. Its function is as follows. Xylitol dehydrogenase which catalyzes the conversion of xylitol to D-xylulose. Xylose is a major component of hemicelluloses such as xylan. Most fungi utilize D-xylose via three enzymatic reactions, xylose reductase (XR), xylitol dehydrogenase (XDH), and xylulokinase, to form xylulose 5-phosphate, which enters pentose phosphate pathway. The chain is Probable D-xylulose reductase A (xdhA) from Aspergillus niger (strain ATCC MYA-4892 / CBS 513.88 / FGSC A1513).